Reading from the N-terminus, the 56-residue chain is Large ribosomal subunit protein eL37 (56 aa).

4 residues coordinate Zn(2+): Cys19, Cys22, Cys34, and Cys37. The segment at 19-37 (CRRCGSVSLNVHTKQCTSC) adopts a C4-type zinc-finger fold.

It belongs to the eukaryotic ribosomal protein eL37 family. The cofactor is Zn(2+).

Binds to the 23S rRNA. The sequence is that of Large ribosomal subunit protein eL37 from Methanosarcina mazei (strain ATCC BAA-159 / DSM 3647 / Goe1 / Go1 / JCM 11833 / OCM 88) (Methanosarcina frisia).